The chain runs to 477 residues: Alkaline phosphatase (477 aa).

Asp-44 lines the Mg(2+) pocket. Asp-44 is a Zn(2+) binding site. Catalysis depends on Ser-94, which acts as the Phosphoserine intermediate. Asn-124 is a glycosylation site (N-linked (GlcNAc...) asparagine). His-155 and Thr-157 together coordinate Mg(2+). A disulfide bond links Cys-165 and Cys-185. N-linked (GlcNAc...) asparagine glycosylation occurs at Asn-214. Mg(2+) is bound at residue Glu-315. Residues Asp-320, His-324, Asp-361, and His-362 each coordinate Zn(2+). N-linked (GlcNAc...) asparagine glycosylation is present at Asn-413. Residue His-437 coordinates Zn(2+).

As to quaternary structure, homodimer. The cofactor is Mg(2+). Zn(2+) serves as cofactor.

Its subcellular location is the cell membrane. It carries out the reaction a phosphate monoester + H2O = an alcohol + phosphate. The sequence is that of Alkaline phosphatase from Gadus morhua (Atlantic cod).